The sequence spans 310 residues: Nucleotide-binding protein BLA_1368 (310 aa).

The segment at 1 to 21 (MQSARNEQRGTGPESPHAASP) is disordered. Residue 32 to 39 (GMSGAGRS) coordinates ATP. 83–86 (DVRS) is a binding site for GTP.

Belongs to the RapZ-like family.

Displays ATPase and GTPase activities. The polypeptide is Nucleotide-binding protein BLA_1368 (Bifidobacterium animalis subsp. lactis (strain AD011)).